The chain runs to 525 residues: AarF domain-containing protein kinase 1 (525 aa).

The region spanning 148 to 477 (SFDDTPLGAA…HKKRDAGSFF (330 aa)) is the Protein kinase domain. ATP-binding positions include 154-162 (LGAASLAQV) and lysine 176. Aspartate 308 (proton acceptor) is an active-site residue.

It belongs to the protein kinase superfamily. ADCK protein kinase family.

It localises to the mitochondrion. Functionally, appears to be essential for maintaining mitochondrial cristae formation and mitochondrial function by acting via YME1L1 in a kinase-independent manner to regulate essential mitochondrial structural proteins OPA1 and IMMT. The action of this enzyme is not yet clear. It is not known if it has protein kinase activity and what type of substrate it would phosphorylate (Ser, Thr or Tyr). The chain is AarF domain-containing protein kinase 1 (Adck1) from Mus musculus (Mouse).